Here is a 660-residue protein sequence, read N- to C-terminus: MKAVVFAYHDIGCTGIRALAEAGYEIAAIFTHADNAAENHFFASVARTAAELGVPVYAPEDANHPLWVDRIRGMKPDAIFSFHYRHMLNDDIINSASLGAFNLHASLLPKYRGRAPLNWVLVNGEQETGVTLHRMVKRADAGAIIAQNTVAIADRDDALTLHRKVCAAAGELLAEALPAIKIGEFSEHQQDESQASYVGRRTPEDGRIDWHLPAQRVYNLVRAVTDPWPGAFGYVGTGKFIVWQSKIHYDRAAAKPGTVLSVAPFVVACAEGALEIVTGQSESGVYMQGSQLAQTLGLVAGARLYNHPAAVAKRRTRVLILGVNGFIGNHLTERLLVDDNFEVFGLDIGSDAIGRFIGHERFHFVEGDISIHSEWIEYHIKKCDVVLPLVAIATPIEYTRNPLRVFELDFEENLKIIRDCVKYKKRIIFPSTSEVYGMCTDASFDEDSSNLVVGPINKQRWIYSVSKQLLDRVIWAYGDKEGLRFTLFRPFNWMGPRLDNLNAARIGSSRAITQLILNLVEGSPIKLIDGGRQKRCFTDIHDGIEALFLIIENKQKNCDGQIINIGNPENEASIKQLAEQLLESFERHPLRDRFPPFAGFREVESSTYYGKGYQDVEHRKPSIRNAKQLLNWQPTIAMDKTIDDTLDFFLQSVEPGDAEE.

The segment at 1–304 (MKAVVFAYHD…TLGLVAGARL (304 aa)) is formyltransferase ArnAFT. Catalysis depends on His-104, which acts as the Proton donor; for formyltransferase activity. (6R)-10-formyltetrahydrofolate is bound by residues Arg-114 and 136-140 (VKRAD). Positions 314-660 (RRTRVLILGV…QSVEPGDAEE (347 aa)) are dehydrogenase ArnADH. NAD(+) is bound by residues Asp-347 and 368–369 (DI). UDP-alpha-D-glucuronate is bound by residues Ala-393, Tyr-398, and 432–433 (TS). Glu-434 functions as the Proton acceptor; for decarboxylase activity in the catalytic mechanism. UDP-alpha-D-glucuronate-binding positions include Arg-460, Asn-492, 526–535 (KLIDGGRQKR), and Tyr-613. Catalysis depends on Arg-619, which acts as the Proton donor; for decarboxylase activity.

The protein in the N-terminal section; belongs to the Fmt family. UDP-L-Ara4N formyltransferase subfamily. It in the C-terminal section; belongs to the NAD(P)-dependent epimerase/dehydratase family. UDP-glucuronic acid decarboxylase subfamily. In terms of assembly, homohexamer, formed by a dimer of trimers.

It carries out the reaction UDP-alpha-D-glucuronate + NAD(+) = UDP-beta-L-threo-pentopyranos-4-ulose + CO2 + NADH. The enzyme catalyses UDP-4-amino-4-deoxy-beta-L-arabinose + (6R)-10-formyltetrahydrofolate = UDP-4-deoxy-4-formamido-beta-L-arabinose + (6S)-5,6,7,8-tetrahydrofolate + H(+). Its pathway is nucleotide-sugar biosynthesis; UDP-4-deoxy-4-formamido-beta-L-arabinose biosynthesis; UDP-4-deoxy-4-formamido-beta-L-arabinose from UDP-alpha-D-glucuronate: step 1/3. It participates in nucleotide-sugar biosynthesis; UDP-4-deoxy-4-formamido-beta-L-arabinose biosynthesis; UDP-4-deoxy-4-formamido-beta-L-arabinose from UDP-alpha-D-glucuronate: step 3/3. It functions in the pathway bacterial outer membrane biogenesis; lipopolysaccharide biosynthesis. Bifunctional enzyme that catalyzes the oxidative decarboxylation of UDP-glucuronic acid (UDP-GlcUA) to UDP-4-keto-arabinose (UDP-Ara4O) and the addition of a formyl group to UDP-4-amino-4-deoxy-L-arabinose (UDP-L-Ara4N) to form UDP-L-4-formamido-arabinose (UDP-L-Ara4FN). The modified arabinose is attached to lipid A and is required for resistance to polymyxin and cationic antimicrobial peptides. The sequence is that of Bifunctional polymyxin resistance protein ArnA from Erwinia tasmaniensis (strain DSM 17950 / CFBP 7177 / CIP 109463 / NCPPB 4357 / Et1/99).